The chain runs to 218 residues: Pyridoxine/pyridoxamine 5'-phosphate oxidase (218 aa).

Substrate-binding positions include 14–17 (RREY) and lysine 72. FMN-binding positions include 67–72 (RIVLLK), 82–83 (YT), arginine 88, lysine 89, and glutamine 111. Residues tyrosine 129, arginine 133, and serine 137 each coordinate substrate. Residues 146–147 (QS) and tryptophan 191 each bind FMN. 197–199 (RLH) contributes to the substrate binding site. Arginine 201 is an FMN binding site.

Belongs to the pyridoxamine 5'-phosphate oxidase family. As to quaternary structure, homodimer. It depends on FMN as a cofactor.

It catalyses the reaction pyridoxamine 5'-phosphate + O2 + H2O = pyridoxal 5'-phosphate + H2O2 + NH4(+). The enzyme catalyses pyridoxine 5'-phosphate + O2 = pyridoxal 5'-phosphate + H2O2. Its pathway is cofactor metabolism; pyridoxal 5'-phosphate salvage; pyridoxal 5'-phosphate from pyridoxamine 5'-phosphate: step 1/1. It participates in cofactor metabolism; pyridoxal 5'-phosphate salvage; pyridoxal 5'-phosphate from pyridoxine 5'-phosphate: step 1/1. In terms of biological role, catalyzes the oxidation of either pyridoxine 5'-phosphate (PNP) or pyridoxamine 5'-phosphate (PMP) into pyridoxal 5'-phosphate (PLP). The chain is Pyridoxine/pyridoxamine 5'-phosphate oxidase from Enterobacter sp. (strain 638).